The chain runs to 147 residues: UPF0306 protein YhbP (147 aa).

Belongs to the UPF0306 family.

This chain is UPF0306 protein YhbP, found in Shigella sonnei (strain Ss046).